The primary structure comprises 364 residues: tRNA-specific 2-thiouridylase MnmA (364 aa).

Residues 12 to 19 (GMSGGVDS) and Met38 contribute to the ATP site. An interaction with target base in tRNA region spans residues 98–100 (NPD). Cys103 (nucleophile) is an active-site residue. Cys103 and Cys199 are disulfide-bonded. Gly127 is an ATP binding site. An interaction with tRNA region spans residues 149-151 (KDQ). Cys199 (cysteine persulfide intermediate) is an active-site residue. The interaction with tRNA stretch occupies residues 307-308 (RY).

Belongs to the MnmA/TRMU family.

Its subcellular location is the cytoplasm. The enzyme catalyses S-sulfanyl-L-cysteinyl-[protein] + uridine(34) in tRNA + AH2 + ATP = 2-thiouridine(34) in tRNA + L-cysteinyl-[protein] + A + AMP + diphosphate + H(+). Catalyzes the 2-thiolation of uridine at the wobble position (U34) of tRNA, leading to the formation of s(2)U34. The sequence is that of tRNA-specific 2-thiouridylase MnmA from Shouchella clausii (strain KSM-K16) (Alkalihalobacillus clausii).